A 390-amino-acid polypeptide reads, in one-letter code: GTPase Obg (390 aa).

Residues 1–159 (MKFVDEASIL…RELLLELMLL (159 aa)) enclose the Obg domain. The tract at residues 127 to 147 (NTRFKSSVNRTPRQKTNGTPG) is disordered. Over residues 129–145 (RFKSSVNRTPRQKTNGT) the composition is skewed to polar residues. The OBG-type G domain occupies 160–333 (ADVGMLGMPN…LCWDVMTFII (174 aa)). GTP-binding positions include 166–173 (GMPNAGKS), 191–195 (FTTLV), 213–216 (DIPG), 283–286 (NKID), and 314–316 (SAA). Mg(2+)-binding residues include S173 and T193.

The protein belongs to the TRAFAC class OBG-HflX-like GTPase superfamily. OBG GTPase family. In terms of assembly, monomer. The cofactor is Mg(2+).

It localises to the cytoplasm. Functionally, an essential GTPase which binds GTP, GDP and possibly (p)ppGpp with moderate affinity, with high nucleotide exchange rates and a fairly low GTP hydrolysis rate. Plays a role in control of the cell cycle, stress response, ribosome biogenesis and in those bacteria that undergo differentiation, in morphogenesis control. The polypeptide is GTPase Obg (Shigella dysenteriae serotype 1 (strain Sd197)).